The chain runs to 386 residues: PqqA peptide cyclase (386 aa).

The 220-residue stretch at 9-228 folds into the Radical SAM core domain; that stretch reads SKPPLWLLAE…RQYIDQHHLK (220 aa). Residues cysteine 23, cysteine 27, and cysteine 30 each contribute to the [4Fe-4S] cluster site.

This sequence belongs to the radical SAM superfamily. PqqE family. Interacts with PqqD. The interaction is necessary for activity of PqqE. It depends on [4Fe-4S] cluster as a cofactor.

The catalysed reaction is [PQQ precursor protein] + S-adenosyl-L-methionine = E-Y cross-linked-[PQQ precursor protein] + 5'-deoxyadenosine + L-methionine + H(+). The protein operates within cofactor biosynthesis; pyrroloquinoline quinone biosynthesis. Its function is as follows. Catalyzes the cross-linking of a glutamate residue and a tyrosine residue in the PqqA protein as part of the biosynthesis of pyrroloquinoline quinone (PQQ). The protein is PqqA peptide cyclase of Acinetobacter baylyi (strain ATCC 33305 / BD413 / ADP1).